Here is a 270-residue protein sequence, read N- to C-terminus: Type III pantothenate kinase (270 aa).

ATP is bound at residue 6–13; that stretch reads DVRNTHTV. Residue 109 to 112 coordinates substrate; sequence GADR. Asp111 functions as the Proton acceptor in the catalytic mechanism. Position 131 (Asp131) interacts with K(+). ATP is bound at residue Ser134. Thr186 serves as a coordination point for substrate.

The protein belongs to the type III pantothenate kinase family. In terms of assembly, homodimer. NH4(+) is required as a cofactor. It depends on K(+) as a cofactor.

It is found in the cytoplasm. It carries out the reaction (R)-pantothenate + ATP = (R)-4'-phosphopantothenate + ADP + H(+). It participates in cofactor biosynthesis; coenzyme A biosynthesis; CoA from (R)-pantothenate: step 1/5. In terms of biological role, catalyzes the phosphorylation of pantothenate (Pan), the first step in CoA biosynthesis. The polypeptide is Type III pantothenate kinase (Mycolicibacterium gilvum (strain PYR-GCK) (Mycobacterium gilvum (strain PYR-GCK))).